A 233-amino-acid chain; its full sequence is Large ribosomal subunit protein uL1 (233 aa).

Belongs to the universal ribosomal protein uL1 family. As to quaternary structure, part of the 50S ribosomal subunit.

In terms of biological role, binds directly to 23S rRNA. The L1 stalk is quite mobile in the ribosome, and is involved in E site tRNA release. Protein L1 is also a translational repressor protein, it controls the translation of the L11 operon by binding to its mRNA. This Buchnera aphidicola subsp. Baizongia pistaciae (strain Bp) protein is Large ribosomal subunit protein uL1.